Consider the following 738-residue polypeptide: Envelope glycoprotein gp160 (738 aa).

The signal sequence occupies residues 1-21 (MCGKSLLCVASLLASAYLVYC). The Extracellular portion of the chain corresponds to 22–670 (TQYVTVFYGV…LTSWIKYIQY (649 aa)). N-linked (GlcNAc...) asparagine; by host glycosylation occurs at Asn-36. A disulfide bridge connects residues Cys-43 and Cys-56. N-linked (GlcNAc...) asparagine; by host glycans are attached at residues Asn-69, Asn-113, Asn-117, Asn-118, Asn-132, Asn-141, Asn-169, Asn-182, Asn-197, Asn-229, Asn-232, Asn-263, Asn-269, Asn-280, Asn-291, Asn-301, Asn-356, Asn-362, Asn-389, Asn-402, Asn-439, Asn-454, and Asn-457. Cystine bridges form between Cys-100–Cys-205, Cys-107–Cys-196, Cys-112–Cys-153, Cys-218–Cys-248, and Cys-228–Cys-240. The tract at residues 112-152 (CNSTTNNTTTTGSTTGMSEINETSPSYSDNCTGLGKEEIVN) is V1. The segment at 153-196 (CQFYMTGLERDKKKQYNETWYSKDVVCESNNTKDGKNRCYMNHC) is V2. Residues 296 to 328 (CKRPGNKTVVPITLMSGLVFHSQPINTRPRQAW) form a V3 region. An intrachain disulfide couples Cys-296 to Cys-329. Disulfide bonds link Cys-381–Cys-438 and Cys-388–Cys-411. Positions 388 to 411 (CNMTWFLNWVENRPNQTQHNYAPC) are V4. Positions 454 to 460 (NQTNITF) are V5. The interval 503-523 (GVFVLGFLGFLATAGSAMGAA) is fusion peptide. The tract at residues 566 to 582 (LQARVTAIEKYLKDQAQ) is immunosuppression. Residues Asn-602, Asn-611, and Asn-627 are each glycosylated (N-linked (GlcNAc...) asparagine; by host). Residues 615-636 (QEWEKQVRYLEANISQSLEQAQ) adopt a coiled-coil conformation. The interval 648–669 (KLNSWDVFGNWFDLTSWIKYIQ) is MPER; binding to GalCer. Residues 671–691 (GVYIVVGVIVLRIAIYIVQLL) form a helical membrane-spanning segment. The Cytoplasmic portion of the chain corresponds to 692 to 738 (SRLRKGYRPVFSSPPGYLQQIHIHTDRGQPANEGTEEDDRDDDGYDL). The YXXV motif; contains endocytosis signal signature appears at 698–701 (YRPV). A disordered region spans residues 716–738 (TDRGQPANEGTEEDDRDDDGYDL). A compositionally biased stretch (acidic residues) spans 725–738 (GTEEDDRDDDGYDL).

The mature envelope protein (Env) consists of a homotrimer of non-covalently associated gp120-gp41 heterodimers. The resulting complex protrudes from the virus surface as a spike. There seems to be as few as 10 spikes on the average virion. Interacts with human CD4, CCR5 and CXCR4, to form a P4HB/PDI-CD4-CXCR4-gp120 complex. Gp120 also interacts with the C-type lectins CD209/DC-SIGN and CLEC4M/DC-SIGNR (collectively referred to as DC-SIGN(R)). Gp120 and gp41 interact with GalCer. As to quaternary structure, the mature envelope protein (Env) consists of a homotrimer of non-covalently associated gp120-gp41 heterodimers. The resulting complex protrudes from the virus surface as a spike. There seems to be as few as 10 spikes on the average virion. Specific enzymatic cleavages in vivo yield mature proteins. Envelope glycoproteins are synthesized as an inactive precursor that is heavily N-glycosylated and processed likely by host cell furin in the Golgi to yield the mature SU and TM proteins. The cleavage site between SU and TM requires the minimal sequence [KR]-X-[KR]-R. Post-translationally, palmitoylation of the transmembrane protein and of Env polyprotein (prior to its proteolytic cleavage) is essential for their association with host cell membrane lipid rafts. Palmitoylation is therefore required for envelope trafficking to classical lipid rafts, but not for viral replication.

The protein localises to the virion membrane. It is found in the host cell membrane. It localises to the host endosome membrane. In terms of biological role, the surface protein gp120 (SU) attaches the virus to the host lymphoid cell by binding to the primary receptor CD4. This interaction induces a structural rearrangement creating a high affinity binding site for a chemokine coreceptor like CXCR4 and/or CCR5. This peculiar 2 stage receptor-interaction strategy allows gp120 to maintain the highly conserved coreceptor-binding site in a cryptic conformation, protected from neutralizing antibodies. Since CD4 also displays a binding site for the disulfide-isomerase P4HB/PDI, a P4HB/PDI-CD4-CXCR4-gp120 complex may form. In that complex, P4HB/PDI could reach and reduce gp120 disulfide bonds, causing major conformational changes in gp120. TXN, another PDI family member could also be involved in disulfide rearrangements in Env during fusion. These changes are transmitted to the transmembrane protein gp41 and are thought to activate its fusogenic potential by unmasking its fusion peptide. The surface protein gp120 is a ligand for CD209/DC-SIGN and CLEC4M/DC-SIGNR, which are respectively found on dendritic cells (DCs), and on endothelial cells of liver sinusoids and lymph node sinuses. These interactions allow capture of viral particles at mucosal surfaces by these cells and subsequent transmission to permissive cells. DCs are professional antigen presenting cells, critical for host immunity by inducing specific immune responses against a broad variety of pathogens. They act as sentinels in various tissues where they take up antigen, process it, and present it to T-cells following migration to lymphoid organs. HIV subverts the migration properties of dendritic cells to gain access to CD4+ T-cells in lymph nodes. Virus transmission to permissive T-cells occurs either in trans (without DCs infection, through viral capture and transmission), or in cis (following DCs productive infection, through the usual CD4-gp120 interaction), thereby inducing a robust infection. In trans infection, bound virions remain infectious over days and it is proposed that they are not degraded, but protected in non-lysosomal acidic organelles within the DCs close to the cell membrane thus contributing to the viral infectious potential during DCs' migration from the periphery to the lymphoid tissues. On arrival at lymphoid tissues, intact virions recycle back to DCs' cell surface allowing virus transmission to CD4+ T-cells. Virion capture also seems to lead to MHC-II-restricted viral antigen presentation, and probably to the activation of HIV-specific CD4+ cells. Its function is as follows. The transmembrane protein gp41 (TM) acts as a class I viral fusion protein. Under the current model, the protein has at least 3 conformational states: pre-fusion native state, pre-hairpin intermediate state, and post-fusion hairpin state. During fusion of viral and target intracellular membranes, the coiled coil regions (heptad repeats) assume a trimer-of-hairpins structure, positioning the fusion peptide in close proximity to the C-terminal region of the ectodomain. The formation of this structure appears to drive apposition and subsequent fusion of viral and target cell membranes. Complete fusion occurs in host cell endosomes and is dynamin-dependent, however some lipid transfer might occur at the plasma membrane. The virus undergoes clathrin-dependent internalization long before endosomal fusion, thus minimizing the surface exposure of conserved viral epitopes during fusion and reducing the efficacy of inhibitors targeting these epitopes. Membranes fusion leads to delivery of the nucleocapsid into the cytoplasm. Functionally, the envelope glycoprotein gp160 precursor down-modulates cell surface CD4 antigen by interacting with it in the endoplasmic reticulum and blocking its transport to the cell surface. In terms of biological role, the gp120-gp41 heterodimer seems to contribute to T-cell depletion during HIV-1 infection. The envelope glycoproteins expressed on the surface of infected cells induce apoptosis through an interaction with uninfected cells expressing the receptor (CD4) and the coreceptors CXCR4 or CCR5. This type of bystander killing may be obtained by at least three distinct mechanisms. First, the interaction between the 2 cells can induce cellular fusion followed by nuclear fusion within the syncytium. Syncytia are condemned to die from apoptosis. Second, the 2 interacting cells may not fuse entirely and simply exchange plasma membrane lipids, after a sort of hemifusion process, followed by rapid death. Third, it is possible that virus-infected cells, on the point of undergoing apoptosis, fuse with CD4-expressing cells, in which case apoptosis is rapidly transmitted from one cell to the other and thus occurs in a sort of contagious fashion. The gp120-gp41 heterodimer allows rapid transcytosis of the virus through CD4 negative cells such as simple epithelial monolayers of the intestinal, rectal and endocervical epithelial barriers. Both gp120 and gp41 specifically recognize glycosphingolipids galactosyl-ceramide (GalCer) or 3' sulfo-galactosyl-ceramide (GalS) present in the lipid rafts structures of epithelial cells. Binding to these alternative receptors allows the rapid transcytosis of the virus through the epithelial cells. This transcytotic vesicle-mediated transport of virions from the apical side to the basolateral side of the epithelial cells does not involve infection of the cells themselves. This Human immunodeficiency virus type 2 subtype A (isolate Ghana-1) (HIV-2) protein is Envelope glycoprotein gp160 (env).